Consider the following 691-residue polypeptide: Methionine--tRNA ligase (691 aa).

A 'HIGH' region motif is present at residues Pro-15–His-25. Residues Cys-147, Cys-150, Cys-160, and Cys-163 each coordinate Zn(2+). Positions Lys-336–Ser-340 match the 'KMSKS' region motif. Thr-339 contributes to the ATP binding site. A tRNA-binding domain is found at Asp-589–Asn-691.

Belongs to the class-I aminoacyl-tRNA synthetase family. MetG type 1 subfamily. As to quaternary structure, homodimer. The cofactor is Zn(2+).

The protein resides in the cytoplasm. It carries out the reaction tRNA(Met) + L-methionine + ATP = L-methionyl-tRNA(Met) + AMP + diphosphate. Its function is as follows. Is required not only for elongation of protein synthesis but also for the initiation of all mRNA translation through initiator tRNA(fMet) aminoacylation. The polypeptide is Methionine--tRNA ligase (Christiangramia forsetii (strain DSM 17595 / CGMCC 1.15422 / KT0803) (Gramella forsetii)).